Consider the following 394-residue polypeptide: S-adenosylmethionine synthase 2 (394 aa).

E11 contributes to the Mg(2+) binding site. H17 serves as a coordination point for ATP. E45 is a K(+) binding site. Residues E58 and Q101 each contribute to the L-methionine site. ATP-binding positions include 169–171 (DGK), 237–240 (SGRF), D248, 254–255 (RK), A271, K275, and K279. D248 contacts L-methionine. K279 contributes to the L-methionine binding site.

This sequence belongs to the AdoMet synthase family. Homotetramer. Mn(2+) serves as cofactor. Requires Mg(2+) as cofactor. The cofactor is Co(2+). It depends on K(+) as a cofactor.

The protein localises to the cytoplasm. It carries out the reaction L-methionine + ATP + H2O = S-adenosyl-L-methionine + phosphate + diphosphate. It functions in the pathway amino-acid biosynthesis; S-adenosyl-L-methionine biosynthesis; S-adenosyl-L-methionine from L-methionine: step 1/1. In terms of biological role, catalyzes the formation of S-adenosylmethionine from methionine and ATP. The reaction comprises two steps that are both catalyzed by the same enzyme: formation of S-adenosylmethionine (AdoMet) and triphosphate, and subsequent hydrolysis of the triphosphate. This Oryza sativa subsp. japonica (Rice) protein is S-adenosylmethionine synthase 2 (SAM2).